A 185-amino-acid polypeptide reads, in one-letter code: Elongation factor P (185 aa).

This sequence belongs to the elongation factor P family.

It localises to the cytoplasm. The protein operates within protein biosynthesis; polypeptide chain elongation. Involved in peptide bond synthesis. Stimulates efficient translation and peptide-bond synthesis on native or reconstituted 70S ribosomes in vitro. Probably functions indirectly by altering the affinity of the ribosome for aminoacyl-tRNA, thus increasing their reactivity as acceptors for peptidyl transferase. This Caldanaerobacter subterraneus subsp. tengcongensis (strain DSM 15242 / JCM 11007 / NBRC 100824 / MB4) (Thermoanaerobacter tengcongensis) protein is Elongation factor P.